Here is a 152-residue protein sequence, read N- to C-terminus: Regulatory protein RecX (152 aa).

This sequence belongs to the RecX family.

The protein localises to the cytoplasm. In terms of biological role, modulates RecA activity. The polypeptide is Regulatory protein RecX (Chromohalobacter salexigens (strain ATCC BAA-138 / DSM 3043 / CIP 106854 / NCIMB 13768 / 1H11)).